Here is a 329-residue protein sequence, read N- to C-terminus: NADH-quinone oxidoreductase subunit H (329 aa).

8 helical membrane passes run 11–31, 81–101, 114–134, 154–174, 187–207, 238–258, 270–290, and 309–329; these read IVVA…CGAL, LIFT…FAVV, IGLL…LFAG, ISYE…TGSF, TWFI…GVAV, FFVG…TLFF, QLSF…FILL, and FCLP…LAAQ.

The protein belongs to the complex I subunit 1 family. In terms of assembly, NDH-1 is composed of 13 different subunits. Subunits NuoA, H, J, K, L, M, N constitute the membrane sector of the complex.

It is found in the cell inner membrane. The catalysed reaction is a quinone + NADH + 5 H(+)(in) = a quinol + NAD(+) + 4 H(+)(out). Functionally, NDH-1 shuttles electrons from NADH, via FMN and iron-sulfur (Fe-S) centers, to quinones in the respiratory chain. The immediate electron acceptor for the enzyme in this species is believed to be ubiquinone. Couples the redox reaction to proton translocation (for every two electrons transferred, four hydrogen ions are translocated across the cytoplasmic membrane), and thus conserves the redox energy in a proton gradient. This subunit may bind ubiquinone. The polypeptide is NADH-quinone oxidoreductase subunit H (Azotobacter vinelandii (strain DJ / ATCC BAA-1303)).